Reading from the N-terminus, the 70-residue chain is Small ribosomal subunit protein bS18c (70 aa).

This sequence belongs to the bacterial ribosomal protein bS18 family. Part of the 30S ribosomal subunit.

It is found in the plastid. Its subcellular location is the chloroplast. The protein is Small ribosomal subunit protein bS18c of Gracilaria tenuistipitata var. liui (Red alga).